A 360-amino-acid polypeptide reads, in one-letter code: MARASPLLMICLVLGSSFATYNLVTMIIHYGSADSLATEDGGLFFDPIVEMPEHVKNTKTSKAPFHIALTATDAIYNKWQCRIMYYWYKKQRSLPGSEMGGFTRILHSGKADNLMDEIPTVVVDPLPEGLDRGYVVLNRPWAFVQWLEKANIEEEYILMAEPDHVFVRPLPNLAFGENPAAFPFFYIKPKENEKIVRKYYPEENGPVTNVDPIGNSPVIIRKDLIAKIAPTWMNISMKMKEDPETDKAFGWVLEMYGYAVASALHGVRHILRKDFMLQPPWDTETFNKYIIHYTYGCDYNLKGELTYGKIGEWRFDKRSHLRGPPPRNLPLPPPGVPESVATLVKMVNEASANIPNWDTL.

The chain crosses the membrane as a helical; Signal-anchor span at residues 13–33; it reads VLGSSFATYNLVTMIIHYGSA.

It is found in the golgi apparatus membrane. It carries out the reaction trans-4-hydroxy-L-prolyl-[protein] + UDP-beta-L-arabinofuranose = O-(beta-L-arabinofuranosyl)-trans-4-hydroxy-L-prolyl-[protein] + UDP + H(+). Functionally, glycosyltransferase involved in the O-arabinosylation of several proteins including extensins and small signaling peptides. Catalyzes the transfer of the initial L-arabinose to the hydroxyl group of Hyp residues. Probably involved in the arabinosylation of CLAVATA3/ESR-related (CLE) signaling peptides that move from root to shoot, to interact with SUNN receptor kinase signaling that regulates nodulation. Involved in long distance nodulation signaling events. Involved in the autoregulation of nodulation (AON), a long distance systemic signaling from root to shoot and back again, which allows legumes to limit the number of root nodules formed based on available nitrogen and previous rhizobial colonization. Functions in the root, upstream of the shoot receptor kinase SUNN and via CLE peptide, to control AON. The sequence is that of Hydroxyproline O-arabinosyltransferase RDN2 from Medicago truncatula (Barrel medic).